We begin with the raw amino-acid sequence, 174 residues long: Peptide deformylase (174 aa).

Fe cation contacts are provided by cysteine 98 and histidine 140. The active site involves glutamate 141. Histidine 144 serves as a coordination point for Fe cation.

It belongs to the polypeptide deformylase family. Fe(2+) serves as cofactor.

It carries out the reaction N-terminal N-formyl-L-methionyl-[peptide] + H2O = N-terminal L-methionyl-[peptide] + formate. Removes the formyl group from the N-terminal Met of newly synthesized proteins. Requires at least a dipeptide for an efficient rate of reaction. N-terminal L-methionine is a prerequisite for activity but the enzyme has broad specificity at other positions. This is Peptide deformylase from Bradyrhizobium diazoefficiens (strain JCM 10833 / BCRC 13528 / IAM 13628 / NBRC 14792 / USDA 110).